We begin with the raw amino-acid sequence, 183 residues long: Threonylcarbamoyl-AMP synthase (183 aa).

Positions 1-183 (MNREQIADAL…LRTNQLFRQG (183 aa)) constitute a YrdC-like domain.

The protein belongs to the SUA5 family. TsaC subfamily.

The protein localises to the cytoplasm. The enzyme catalyses L-threonine + hydrogencarbonate + ATP = L-threonylcarbamoyladenylate + diphosphate + H2O. Functionally, required for the formation of a threonylcarbamoyl group on adenosine at position 37 (t(6)A37) in tRNAs that read codons beginning with adenine. Catalyzes the conversion of L-threonine, HCO(3)(-)/CO(2) and ATP to give threonylcarbamoyl-AMP (TC-AMP) as the acyladenylate intermediate, with the release of diphosphate. In Haemophilus influenzae (strain ATCC 51907 / DSM 11121 / KW20 / Rd), this protein is Threonylcarbamoyl-AMP synthase.